The sequence spans 369 residues: Peptide chain release factor subunit 1 (369 aa).

This sequence belongs to the eukaryotic release factor 1 family. As to quaternary structure, heterodimer of two subunits, one of which binds GTP.

Its subcellular location is the cytoplasm. Functionally, directs the termination of nascent peptide synthesis (translation) in response to the termination codons UAA, UAG and UGA. This Saccharolobus solfataricus (strain ATCC 35092 / DSM 1617 / JCM 11322 / P2) (Sulfolobus solfataricus) protein is Peptide chain release factor subunit 1 (prf1).